The sequence spans 137 residues: Proofreading thioesterase EntH (137 aa).

The active-site Nucleophile or proton acceptor is the Glu63.

It belongs to the thioesterase PaaI family. In terms of assembly, homotetramer. Dimer of dimers. Interacts specifically with the aryl carrier protein (ArCP) domain of EntB.

Its subcellular location is the cytoplasm. Its pathway is siderophore biosynthesis; enterobactin biosynthesis. Its function is as follows. Required for optimal enterobactin synthesis. Acts as a proofreading enzyme that prevents EntB misacylation by hydrolyzing the thioester bound existing between EntB and wrongly charged molecules. The chain is Proofreading thioesterase EntH from Enterobacter lignolyticus (strain SCF1).